The following is a 25-amino-acid chain: Caerin-1.9 (25 aa).

Leu25 is subject to Leucine amide.

It belongs to the frog skin active peptide (FSAP) family. Caerin subfamily. In terms of tissue distribution, expressed by the skin dorsal glands.

It localises to the secreted. Functionally, antimicrobial peptide. Adopts an alpha helical conformation which can disrupt bacterial membranes. Strongly inhibits the formation of NO by neuronal nitric oxide synthase (nNOS) at micromolar concentrations. Acts by a non-competitive mechanism, probably by binding to calcium/calmodulin and as a consequence blocking calmodulin attachment to nNOS. The protein is Caerin-1.9 of Ranoidea chloris (Red-eyed tree frog).